Here is a 522-residue protein sequence, read N- to C-terminus: METDLAEMPEKGVLSSQDSPHFQEKSTEEGEVAALRLTARSQAAAAAAAPGSRSLRGVHVPPPLHPAPAREEIKSTCSLKACFSLSLTLTYYRTAFLLSTENEGNLHFQCPSDVETRPQSKDSTSVQDFSKAESCKVAIIDRLTRNSVYDSNLEAALECENWLEKQQGNQERHLREMFTHMNSLSEETDHEHDVYWKSFNQKSVLITEDRVPKGSYAFHTLEKSLKQKSNLMKKQRTYKEKKPHKCNDCGELFTCHSVHIQHQRVHTGEKPYTCNECGKSFSHRANLTKHQRTHTRILFECRECKKTFTESSSLATHQRIHVGERPYECNECGKGFNRSTHLVQHQLIHTGVRPYECNECDKAFIHSSALIKHQRTHTGEKPYKCQECGKAFSHCSSLTKHQRVHTGEKPYECSECGKTFSQSTHLVQHQRIHTGEKPYECSECGKTFSQSSNFAKHQRIHIGKKPYKCSECGKAFIHSSALIQHQRTHTGEKPFRCNECGKSFKCSSSLIRHQRVHTEEQP.

Residues 1–30 are disordered; sequence METDLAEMPEKGVLSSQDSPHFQEKSTEEG. 10 C2H2-type zinc fingers span residues 244 to 266, 272 to 294, 299 to 321, 327 to 349, 355 to 377, 383 to 405, 411 to 433, 439 to 461, 467 to 489, and 495 to 517; these read HKCN…QRVH, YTCN…QRTH, FECR…QRIH, YECN…QLIH, YECN…QRTH, YKCQ…QRVH, YECS…QRIH, YKCS…QRTH, and FRCN…QRVH.

Belongs to the krueppel C2H2-type zinc-finger protein family.

Its subcellular location is the nucleus. Its function is as follows. May be involved in transcriptional regulation. This chain is Putative zinc finger protein 286B (ZNF286B), found in Homo sapiens (Human).